A 2197-amino-acid polypeptide reads, in one-letter code: Protein Ycf2 (2197 aa).

Residue Gly1539–Ser1546 coordinates ATP.

Belongs to the Ycf2 family.

Its subcellular location is the plastid. The protein localises to the chloroplast stroma. In terms of biological role, probable ATPase of unknown function. Its presence in a non-photosynthetic plant (Epifagus virginiana) and experiments in tobacco indicate that it has an essential function which is probably not related to photosynthesis. This chain is Protein Ycf2, found in Ipomoea purpurea (Common morning glory).